The primary structure comprises 315 residues: Calumenin (315 aa).

Positions 1–19 (MDLRQFLMCLSLCTAFALS) are cleaved as a signal peptide. The residue at position 44 (Ser44) is a Phosphoserine. Tyr47 is modified (phosphotyrosine). Position 65 is a phosphothreonine (Thr65). EF-hand domains follow at residues 68-103 (ESKERLGKIVSKIDDDKDGFVTVDELKDWIKFAQKR), 104-139 (WIYEDVERQWKGHDLNEDGLVSWEEYKNATYGYVLD), 151-186 (QMMVRDERRFKMADKDGDLIATKEEFTAFLHPEEYD), 188-223 (MKDIVVQETMEDIDKNADGFIDLEEYIGDMYSHDGN), 229-264 (WVKTEREQFVEFRDKNRDGKMDKEETKDWILPSDYD), and 265-300 (HAEAEARHLVYESDQNKDGKLTKEEIVDKYDLFVGS). Residue Ser69 is modified to Phosphoserine. Ca(2+) contacts are provided by Asp81, Asp83, Asp85, Glu92, Asp117, Asn119, Asp121, and Glu128. Asn131 carries N-linked (GlcNAc...) asparagine glycosylation. Asp164 is a Ca(2+) binding site. N6-acetyllysine is present on Lys165. Ca(2+) is bound by residues Asp166, Asp168, Glu175, Asp201, Asn203, Asp205, Glu212, Asp242, Asn244, Asp246, Lys248, and Glu253. Thr254 is subject to Phosphothreonine. 2 positions are modified to phosphoserine: Ser261 and Ser277. Positions 278, 280, 282, 284, and 289 each coordinate Ca(2+). The Prevents secretion from ER motif lies at 312-315 (HDEF).

This sequence belongs to the CREC family. As to quaternary structure, interacts with GGCX.

It localises to the endoplasmic reticulum membrane. The protein resides in the golgi apparatus. The protein localises to the secreted. It is found in the melanosome. Its subcellular location is the sarcoplasmic reticulum lumen. Involved in regulation of vitamin K-dependent carboxylation of multiple N-terminal glutamate residues. Seems to inhibit gamma-carboxylase GGCX. Binds 7 calcium ions with a low affinity. The chain is Calumenin (CALU) from Pongo abelii (Sumatran orangutan).